A 91-amino-acid polypeptide reads, in one-letter code: Small integral membrane protein 13 (91 aa).

The chain crosses the membrane as a helical span at residues 10 to 30 (LVFVATLLIVLLLMVCGWYFV). The tract at residues 47–91 (DTGSQEGDHEPSGSETEEDTSSSPHRIRSARQRRAPADEGHRPLT) is disordered. Serine 58 and serine 60 each carry phosphoserine. Threonine 62 is subject to Phosphothreonine. Serine 69 bears the Phosphoserine mark. Residues 71–80 (HRIRSARQRR) show a composition bias toward basic residues. Over residues 81-91 (APADEGHRPLT) the composition is skewed to basic and acidic residues.

Belongs to the SMIM13 family.

The protein resides in the membrane. In Homo sapiens (Human), this protein is Small integral membrane protein 13 (SMIM13).